A 183-amino-acid chain; its full sequence is NADH-quinone oxidoreductase subunit I (183 aa).

2 consecutive 4Fe-4S ferredoxin-type domains span residues leucine 44–glycine 74 and arginine 90–glutamate 119. The [4Fe-4S] cluster site is built by cysteine 54, cysteine 57, cysteine 60, cysteine 64, cysteine 99, cysteine 102, cysteine 105, and cysteine 109. The tract at residues glutamine 143–glutamine 183 is disordered. Over residues arginine 153 to glutamate 176 the composition is skewed to basic and acidic residues.

It belongs to the complex I 23 kDa subunit family. In terms of assembly, NDH-1 is composed of 14 different subunits. Subunits NuoA, H, J, K, L, M, N constitute the membrane sector of the complex. It depends on [4Fe-4S] cluster as a cofactor.

Its subcellular location is the cell membrane. The catalysed reaction is a quinone + NADH + 5 H(+)(in) = a quinol + NAD(+) + 4 H(+)(out). NDH-1 shuttles electrons from NADH, via FMN and iron-sulfur (Fe-S) centers, to quinones in the respiratory chain. The immediate electron acceptor for the enzyme in this species is believed to be ubiquinone. Couples the redox reaction to proton translocation (for every two electrons transferred, four hydrogen ions are translocated across the cytoplasmic membrane), and thus conserves the redox energy in a proton gradient. In Thermobifida fusca (strain YX), this protein is NADH-quinone oxidoreductase subunit I.